A 643-amino-acid chain; its full sequence is Arginine--tRNA ligase, mitochondrial (643 aa).

Residues 188–198 (PNIAKPFHAGH) carry the 'HIGH' region motif.

This sequence belongs to the class-I aminoacyl-tRNA synthetase family.

The protein resides in the mitochondrion matrix. The catalysed reaction is tRNA(Arg) + L-arginine + ATP = L-arginyl-tRNA(Arg) + AMP + diphosphate. This chain is Arginine--tRNA ligase, mitochondrial (MSR1), found in Saccharomyces cerevisiae (strain ATCC 204508 / S288c) (Baker's yeast).